The primary structure comprises 237 residues: Large ribosomal subunit protein uL3 (237 aa).

Disordered regions lie at residues 133–155 and 213–237; these read ASHG…DPGK and PENA…EGGE. The span at 135-150 shows a compositional bias: polar residues; that stretch reads HGNSITHRSHGSTGQR. Residue glutamine 151 is modified to N5-methylglutamine. Low complexity predominate over residues 220-237; sequence AGLRAGAKAEAAATEGGE.

It belongs to the universal ribosomal protein uL3 family. As to quaternary structure, part of the 50S ribosomal subunit. Forms a cluster with proteins L14 and L19. In terms of processing, methylated by PrmB.

One of the primary rRNA binding proteins, it binds directly near the 3'-end of the 23S rRNA, where it nucleates assembly of the 50S subunit. This Brucella abortus (strain S19) protein is Large ribosomal subunit protein uL3.